Here is a 637-residue protein sequence, read N- to C-terminus: tRNA 5-methylaminomethyl-2-thiouridine biosynthesis bifunctional protein MnmC (637 aa).

Residues 1–232 (MPERIEWLED…KRDNLQGEFN (232 aa)) are tRNA (mnm(5)s(2)U34)-methyltransferase. Positions 255 to 637 (IGAGLAGAAV…YGEAKLVSED (383 aa)) are FAD-dependent cmnm(5)s(2)U34 oxidoreductase.

This sequence in the N-terminal section; belongs to the methyltransferase superfamily. tRNA (mnm(5)s(2)U34)-methyltransferase family. In the C-terminal section; belongs to the DAO family. The cofactor is FAD.

It localises to the cytoplasm. It catalyses the reaction 5-aminomethyl-2-thiouridine(34) in tRNA + S-adenosyl-L-methionine = 5-methylaminomethyl-2-thiouridine(34) in tRNA + S-adenosyl-L-homocysteine + H(+). Functionally, catalyzes the last two steps in the biosynthesis of 5-methylaminomethyl-2-thiouridine (mnm(5)s(2)U) at the wobble position (U34) in tRNA. Catalyzes the FAD-dependent demodification of cmnm(5)s(2)U34 to nm(5)s(2)U34, followed by the transfer of a methyl group from S-adenosyl-L-methionine to nm(5)s(2)U34, to form mnm(5)s(2)U34. This is tRNA 5-methylaminomethyl-2-thiouridine biosynthesis bifunctional protein MnmC from Polaromonas sp. (strain JS666 / ATCC BAA-500).